The primary structure comprises 155 residues: Ribosomal RNA large subunit methyltransferase H (155 aa).

Residues Leu-72, Gly-103, and 122–127 (LSPLTL) contribute to the S-adenosyl-L-methionine site.

The protein belongs to the RNA methyltransferase RlmH family. As to quaternary structure, homodimer.

The protein resides in the cytoplasm. It carries out the reaction pseudouridine(1915) in 23S rRNA + S-adenosyl-L-methionine = N(3)-methylpseudouridine(1915) in 23S rRNA + S-adenosyl-L-homocysteine + H(+). Functionally, specifically methylates the pseudouridine at position 1915 (m3Psi1915) in 23S rRNA. This Haemophilus influenzae (strain PittGG) protein is Ribosomal RNA large subunit methyltransferase H.